We begin with the raw amino-acid sequence, 413 residues long: Alpha-ketoglutarate-dependent xanthine dioxygenase xan1 (413 aa).

Residues 1-18 (MSATATTTVVEPPTTTLT) show a composition bias toward low complexity. The disordered stretch occupies residues 1–24 (MSATATTTVVEPPTTTLTGATEPP). 2 residues coordinate Fe cation: His-183 and Asp-185. Residues Thr-228 and Trp-362 each contribute to the 2-oxoglutarate site. Residue His-377 participates in Fe cation binding. Arg-389 contacts 2-oxoglutarate.

Belongs to the TfdA dioxygenase family. Fe(2+) is required as a cofactor.

The protein localises to the cytoplasm. Its subcellular location is the cytosol. The enzyme catalyses xanthine + 2-oxoglutarate + O2 = urate + succinate + CO2. Alpha-ketoglutarate-dependent xanthine dioxygenase is a non-heme mononuclear Fe(2+) enzyme that decarboxylates alpha-ketoglutarate to succinate and CO(2) while hydroxylating xanthine to generate uric acid. Allows xanthine utilization as a nitrogen source. The polypeptide is Alpha-ketoglutarate-dependent xanthine dioxygenase xan1 (xan1) (Schizosaccharomyces pombe (strain 972 / ATCC 24843) (Fission yeast)).